The primary structure comprises 416 residues: Cysteate synthase (416 aa).

K104 carries the N6-(pyridoxal phosphate)lysine modification. Residue N130 participates in pyridoxal 5'-phosphate binding.

It belongs to the threonine synthase family. Cysteate synthase subfamily. In terms of assembly, homotrimer. The cofactor is pyridoxal 5'-phosphate.

It catalyses the reaction O-phospho-L-serine + sulfite + H(+) = L-cysteate + phosphate. The protein operates within cofactor biosynthesis; coenzyme M biosynthesis. Functionally, specifically catalyzes the beta-elimination of phosphate from L-phosphoserine and the beta-addition of sulfite to the dehydroalanine intermediate to produce L-cysteate. This chain is Cysteate synthase, found in Methanosarcina mazei (strain ATCC BAA-159 / DSM 3647 / Goe1 / Go1 / JCM 11833 / OCM 88) (Methanosarcina frisia).